Consider the following 634-residue polypeptide: E3 ubiquitin/ISG15 ligase TRIM25 (634 aa).

The RING-type zinc finger occupies 13–54 (CSVCLELFKEPVTTPCGHNFCMSCLDETWVVQGPPYRCPQCR). A Phosphothreonine modification is found at Thr90. Ser99 bears the Phosphoserine mark. Lys116 is covalently cross-linked (Glycyl lysine isopeptide (Lys-Gly) (interchain with G-Cter in ISG15)). A coiled-coil region spans residues 215 to 305 (ATKALEDVRS…LIMDKGDEFE (91 aa)). Lys272 carries the post-translational modification N6-acetyllysine. Tyr277 carries the post-translational modification Phosphotyrosine. The segment at 353–437 (KLQKKSEEHN…APKASAAQPD (85 aa)) is disordered. The span at 363–376 (GSGNKGDQTQSTFK) shows a compositional bias: polar residues. Residues 444–634 (KVLENFLTKS…AGTTLSICSK (191 aa)) enclose the B30.2/SPRY domain. N6-acetyllysine is present on Lys572.

Forms homodimers. Interacts (via SPRY domain) with RIGI (via CARD domain). Interacts with ZFHX3. Interacts with NLRP12; this interaction reduces the E3 ubiquitin ligase TRIM25-mediated 'Lys-63'-linked RIGI activation. Interacts with the KHDC3L/FILIA-OOEP/FLOPED scaffold complex and BLM at DNA replication forks. Interacts with RTN3; this interaction prevents RIGI ubiquitination. Interacts with YWHAE. In terms of processing, auto-ISGylated. In terms of tissue distribution, ubiquitous.

Its subcellular location is the cytoplasm. The protein resides in the stress granule. It is found in the nucleus. The enzyme catalyses S-ubiquitinyl-[E2 ubiquitin-conjugating enzyme]-L-cysteine + [acceptor protein]-L-lysine = [E2 ubiquitin-conjugating enzyme]-L-cysteine + N(6)-ubiquitinyl-[acceptor protein]-L-lysine.. The catalysed reaction is ATP + [ISG15] + [protein]-lysine = AMP + diphosphate + [protein]-N-ISGyllysine.. It participates in protein modification; protein ubiquitination. Its function is as follows. Functions as a ubiquitin E3 ligase and as an ISG15 E3 ligase. Involved in innate immune defense against viruses by mediating ubiquitination of RIGI and IFIH1. Mediates 'Lys-63'-linked polyubiquitination of the RIGI N-terminal CARD-like region and may play a role in signal transduction that leads to the production of interferons in response to viral infection. Mediates 'Lys-63'-linked polyubiquitination of IFIH1. Promotes ISGylation of 14-3-3 sigma (SFN), an adapter protein implicated in the regulation of a large spectrum signaling pathway. Mediates estrogen action in various target organs. Mediates the ubiquitination and subsequent proteasomal degradation of ZFHX3. Plays a role in promoting the restart of stalled replication forks via interaction with the KHDC3L-OOEP scaffold and subsequent ubiquitination of BLM, resulting in the recruitment and retainment of BLM at DNA replication forks. Plays an essential role in the antiviral activity of ZAP/ZC3HAV1; an antiviral protein which inhibits the replication of certain viruses. Mechanistically, mediates 'Lys-63'-linked polyubiquitination of ZAP/ZC3HAV1 that is required for its optimal binding to target mRNA. Also mediates the ubiquitination of various substrates implicated in stress granule formation, nonsense-mediated mRNA decay, nucleoside synthesis and mRNA translation and stability. This is E3 ubiquitin/ISG15 ligase TRIM25 (Trim25) from Mus musculus (Mouse).